Consider the following 468-residue polypeptide: ATP synthase subunit beta 1 (468 aa).

151-158 (GGAGVGKT) is a binding site for ATP.

Belongs to the ATPase alpha/beta chains family. F-type ATPases have 2 components, CF(1) - the catalytic core - and CF(0) - the membrane proton channel. CF(1) has five subunits: alpha(3), beta(3), gamma(1), delta(1), epsilon(1). CF(0) has three main subunits: a(1), b(2) and c(9-12). The alpha and beta chains form an alternating ring which encloses part of the gamma chain. CF(1) is attached to CF(0) by a central stalk formed by the gamma and epsilon chains, while a peripheral stalk is formed by the delta and b chains.

It localises to the cell inner membrane. It carries out the reaction ATP + H2O + 4 H(+)(in) = ADP + phosphate + 5 H(+)(out). Its function is as follows. Produces ATP from ADP in the presence of a proton gradient across the membrane. The catalytic sites are hosted primarily by the beta subunits. The protein is ATP synthase subunit beta 1 of Photobacterium profundum (strain SS9).